A 519-amino-acid chain; its full sequence is MIOREX complex component 12 (519 aa).

A mitochondrion-targeting transit peptide spans 1–35 (MLRSLHSAATLSNKRFYSLISHSNRKNIIKKLLRH).

As to quaternary structure, associates with the mitochondrial ribosome.

The protein localises to the mitochondrion. In terms of biological role, component of MIOREX complexes, large expressome-like assemblies of ribosomes with factors involved in all the steps of post-transcriptional gene expression. The chain is MIOREX complex component 12 from Saccharomyces cerevisiae (strain ATCC 204508 / S288c) (Baker's yeast).